A 179-amino-acid chain; its full sequence is Replication restart protein DnaT (179 aa).

The disordered stretch occupies residues 156–179; sequence GGLPKRDVNTVSEPDSQIPPGFRG.

Belongs to the DnaT family. In terms of assembly, homooligomerizes. Interacts with PriB. Component of the replication restart primosome. Primosome assembly occurs via a 'hand-off' mechanism. PriA binds to replication forks, subsequently PriB then DnaT bind; DnaT then displaces ssDNA to generate the helicase loading substrate.

Functionally, involved in the restart of stalled replication forks, which reloads the replicative helicase on sites other than the origin of replication. Can function in multiple replication restart pathways. Displaces ssDNA from a PriB-ssDNA complex. Probably forms a spiral filament on ssDNA. This is Replication restart protein DnaT from Escherichia coli O7:K1 (strain IAI39 / ExPEC).